Here is a 309-residue protein sequence, read N- to C-terminus: THO complex subunit Tho3 (309 aa).

6 WD repeats span residues 22 to 61 (GQQGPIRSLGWNLSGSRLASSSSSGSVLVWNSDRLDFKFT), 65 to 107 (GNRG…PIAE), 109 to 148 (ESNYENIYATWSPSGNYCCASSRDDMLSFIDARERRIMET), 192 to 231 (AHNSNCFCIEFSPDNRHLAIGGADAITSLWDPQELICERS), 234 to 273 (RMDYPIRTLSFSYDSRYLASGSEDRYVDIADTKTGDQIWK), and 275 to 309 (PTNGPLNKVAWHPTKHILAYAVSEPNSSGLKIFGL).

The protein belongs to the THOC3 family. In terms of assembly, component of the transcription/export (TREX) complex, which is at least is formed of SUB2, TEX1 and YRA1 and the THO complex composed of HPR1, MFT1, THO2 and THP1.

Its subcellular location is the nucleus. Component of the TREX complex, which operates in coupling transcription elongation to mRNA export. In Schizosaccharomyces pombe (strain 972 / ATCC 24843) (Fission yeast), this protein is THO complex subunit Tho3 (THO3).